An 807-amino-acid chain; its full sequence is Spondin-1 (807 aa).

The signal sequence occupies residues 1–28; the sequence is MRLSPAPLKLSRTPALLALALPLAAALA. In terms of domain architecture, Reelin spans 29–194; the sequence is FSDETLDKVP…DSTFDGVTDK (166 aa). 17 disulfides stabilise this stretch: Cys-44–Cys-128, Cys-156–Cys-182, Cys-199–Cys-336, Cys-200–Cys-340, Cys-202–Cys-415, Cys-443–Cys-480, Cys-454–Cys-489, Cys-459–Cys-494, Cys-502–Cys-538, Cys-513–Cys-517, Cys-548–Cys-554, Cys-559–Cys-595, Cys-570–Cys-574, Cys-605–Cys-610, Cys-615–Cys-650, Cys-626–Cys-630, and Cys-660–Cys-665. Positions 195–388 constitute a Spondin domain; it reads PILDCCACGT…LTSLDHPQSP (194 aa). An N-linked (GlcNAc...) asparagine glycan is attached at Asn-214. Residues Asp-325, Asp-354, and Asp-358 each coordinate Ca(2+). TSP type-1 domains lie at 442 to 495, 501 to 555, 558 to 611, 614 to 666, 668 to 721, and 754 to 806; these read TCIY…PGCS, TCTM…EECS, SCLM…PECH, PCLL…PECP, DCEL…RKCL, and GCRM…NVHP. A C-linked (Man) tryptophan glycan is attached at Trp-448. C-linked (Man) tryptophan; partial glycosylation is present at Trp-451. Trp-507 carries C-linked (Man) tryptophan glycosylation. C-linked (Man) tryptophan; partial glycosylation is present at Trp-510. C-linked (Man) tryptophan glycosylation occurs at Trp-564. A C-linked (Man) tryptophan; partial glycan is attached at Trp-620. Trp-623 is a glycosylation site (C-linked (Man) tryptophan). The C-linked (Man) tryptophan glycan is linked to Trp-674. A glycan (N-linked (GlcNAc...) asparagine) is linked at Asn-681.

In terms of assembly, binds to the central extracellular domain of APP and inhibits beta-secretase cleavage of APP. In terms of tissue distribution, highest expression in lung, lower expression in brain, heart, kidney, liver and testis, and lowest expression in pancreas, skeletal muscle and ovary. Not expressed in spleen.

The protein resides in the secreted. It is found in the extracellular space. Its subcellular location is the extracellular matrix. Functionally, cell adhesion protein that promotes the attachment of spinal cord and sensory neuron cells and the outgrowth of neurites in vitro. May contribute to the growth and guidance of axons in both the spinal cord and the PNS. Major factor for vascular smooth muscle cell. The chain is Spondin-1 (SPON1) from Homo sapiens (Human).